The primary structure comprises 458 residues: MSLFRSRQAKIHFVGVGGIGMSGIAEVLLNLGYTVSGSDLRESETTRRLAGLGGHISYGHAAENVLQVDVVVISSAVKRDNPEVLEARRRKIPVIPRAEMLAELMRLKYGVAIAGSHGKTTTTSMAAHLLAHAGLDPTAVVGGKVNAFGSNAKLGKGDYMVVEADESDGSFLRIPPTIAIVTNIDPEHLDHWKTPDALRRGFVDFVNRVPFYGLAILCIDHPTVQSILPDVEKRVVTYGESHQADYRAEAIELSGHAVRFDAFRRDEALGRFEVAMVGRHNALNALAVIALGDEMGIPPLVTREALRSFQGVQRRFTVRGEVAGVTVVDDYGHHPAEVKATLQGAREAFKRRVVCLFQPHRYTRTRDLMAEFATAFNDADVLLLTDIYAAGEEPIPGATAANLAEAIRAWGHRDVTVVPRAELARAARERIRPGDLVLTLGAGDVTAAGPELLALLER.

115-121 lines the ATP pocket; that stretch reads GSHGKTT.

Belongs to the MurCDEF family.

The protein resides in the cytoplasm. The catalysed reaction is UDP-N-acetyl-alpha-D-muramate + L-alanine + ATP = UDP-N-acetyl-alpha-D-muramoyl-L-alanine + ADP + phosphate + H(+). Its pathway is cell wall biogenesis; peptidoglycan biosynthesis. Functionally, cell wall formation. The chain is UDP-N-acetylmuramate--L-alanine ligase from Anaeromyxobacter dehalogenans (strain 2CP-C).